Reading from the N-terminus, the 44-residue chain is Tachystatin-A1 (44 aa).

3 disulfide bridges follow: C4/C24, C11/C29, and C23/C41.

Granular hemocytes, small secretory granules.

It localises to the secreted. Exhibits stronger antimicrobial activity against the Gram-positive bacteria (S.aureus (IC(50) is 4.2 ug/ml)) and fungi (C.albicans (IC(50) is 3.0 ug/ml) and P.pastoris (IC(50) is 0.5 ug/ml)) than Gram-negative bacteria (E.coli (IC(50) is 25 ug/ml)). Binds to chitin (8.4 uM are required to obtain 50% of binding). Does not cause hemolysis on sheep erythrocytes. Has no blocking activity on the P-type calcium channel. This is Tachystatin-A1 from Tachypleus tridentatus (Japanese horseshoe crab).